Reading from the N-terminus, the 82-residue chain is ATP synthase subunit c, chloroplastic (82 aa).

A run of 2 helical transmembrane segments spans residues 3–23 (PIIS…AAIG) and 57–77 (LAFM…LLFA).

Belongs to the ATPase C chain family. In terms of assembly, F-type ATPases have 2 components, F(1) - the catalytic core - and F(0) - the membrane proton channel. F(1) has five subunits: alpha(3), beta(3), gamma(1), delta(1), epsilon(1). F(0) has four main subunits: a(1), b(1), b'(1) and c(10-14). The alpha and beta chains form an alternating ring which encloses part of the gamma chain. F(1) is attached to F(0) by a central stalk formed by the gamma and epsilon chains, while a peripheral stalk is formed by the delta, b and b' chains.

The protein localises to the plastid. The protein resides in the chloroplast thylakoid membrane. Its function is as follows. F(1)F(0) ATP synthase produces ATP from ADP in the presence of a proton or sodium gradient. F-type ATPases consist of two structural domains, F(1) containing the extramembraneous catalytic core and F(0) containing the membrane proton channel, linked together by a central stalk and a peripheral stalk. During catalysis, ATP synthesis in the catalytic domain of F(1) is coupled via a rotary mechanism of the central stalk subunits to proton translocation. Functionally, key component of the F(0) channel; it plays a direct role in translocation across the membrane. A homomeric c-ring of between 10-14 subunits forms the central stalk rotor element with the F(1) delta and epsilon subunits. The polypeptide is ATP synthase subunit c, chloroplastic (Phaeodactylum tricornutum (strain CCAP 1055/1)).